Reading from the N-terminus, the 495-residue chain is Cytochrome P450 monooxygenase BOA4 (495 aa).

Residues 12-31 (LANSNTVIAGCIVFALYYLF) traverse the membrane as a helical segment. An N-linked (GlcNAc...) asparagine glycan is attached at Asn115. Residue Cys439 participates in heme binding.

It belongs to the cytochrome P450 family. Heme is required as a cofactor.

It localises to the membrane. It functions in the pathway polyketide biosynthesis. Cytochrome P450 monooxygenase; part of the gene cluster A that mediates the biosynthesis of botcinic acid and its botcinin derivatives, acetate-derived polyketides that contribute to virulence when combined with the sesquiterpene botrydial. Botcinic acid and its derivatives have been shown to induce chlorosis and necrosis during host plant infection, but also have antifungal activities. Two polyketide synthases, BOA6 and BOA9, are involved in the biosynthesis of botcinins. BOA6 mediates the formation of the per-methylated tetraketide core by condensation of four units of malonyl-CoA with one unit of acetyl-CoA, which would be methylated in activated methylene groups to yield a bicyclic acid intermediate that could then either be converted to botrylactone derivatives or lose the starter acetate unit through a retro-Claisen type C-C bond cleavage to yield botcinin derivatives. The second polyketide synthase, BOA9, is probably required for the biosynthesis of the tetraketide side chain of botcinins. The methyltransferase (MT) domain within BOA6 is probably responsible for the incorporation of four methyl groups. The trans-enoyl reductase BOA5 might take over the enoyl reductase function of BOA6 that misses an ER domain. The monooxygenases BOA2, BOA3 and BOA4 might be involved in further hydroxylations at C4, C5 and C8, whereas BOA7, close to BOA9, could potentially be involved in the hydroxylation at C4 in the side chain of botcinins. The polypeptide is Cytochrome P450 monooxygenase BOA4 (Botryotinia fuckeliana (strain B05.10) (Noble rot fungus)).